The following is a 251-amino-acid chain: uncharacterized protein (251 aa).

It belongs to the FAM243 family.

This is an uncharacterized protein from Bos taurus (Bovine).